Consider the following 403-residue polypeptide: MSKFNRMHLIVLDSVGIGAAPDANNFVNAGVPDGASDTLGHISKTVGLNVPNMAKLGLGNIPREQPLKTVPAESNPTGYATKLEEVSLGKDTMTGHWEIMGLNITEPFDTFWNGFPEEILTQIEEFSGRKVIREANKPYSGTAVIDDFGPRQMETGELIIYTSADPVLQIAAHEDIIPVEELYRICEFARSITLERPALLGRIIARPYVGEPENFTRTSNRRDLAISPFAPTVLDKLNEAGIDTYSVGKISDIFNGEGINHDMGHNKSNNHGVDNLIKAMTSEDFKHGFSFTNLVDFDALYGHRRNPQGYRDCLHEFDERLPEIIAAMKEDDLLMITADHGNDPTYAGTDHTREYIPFLAYSPSFKCSGLIPVGHFADISATIADNFGVEKAMIGESFLDKLV.

Residues Asp13, Asp298, His303, Asp339, His340, and His351 each coordinate Mn(2+).

Belongs to the phosphopentomutase family. The cofactor is Mn(2+).

It is found in the cytoplasm. The catalysed reaction is 2-deoxy-alpha-D-ribose 1-phosphate = 2-deoxy-D-ribose 5-phosphate. The enzyme catalyses alpha-D-ribose 1-phosphate = D-ribose 5-phosphate. It participates in carbohydrate degradation; 2-deoxy-D-ribose 1-phosphate degradation; D-glyceraldehyde 3-phosphate and acetaldehyde from 2-deoxy-alpha-D-ribose 1-phosphate: step 1/2. Functionally, isomerase that catalyzes the conversion of deoxy-ribose 1-phosphate (dRib-1-P) and ribose 1-phosphate (Rib-1-P) to deoxy-ribose 5-phosphate (dRib-5-P) and ribose 5-phosphate (Rib-5-P), respectively. This is Phosphopentomutase from Streptococcus thermophilus (strain CNRZ 1066).